The primary structure comprises 511 residues: Inactive cytochrome P450 monooxygenase cloA (511 aa).

Residues 17 to 37 traverse the membrane as a helical segment; that stretch reads ILLTAGLCVPCALVIHGIYNL. Residues asparagine 81 and asparagine 344 are each glycosylated (N-linked (GlcNAc...) asparagine). Residue cysteine 450 participates in heme binding.

It belongs to the cytochrome P450 family. The cofactor is heme.

The protein localises to the membrane. Its function is as follows. Inactive cytochrome P450 monooxygenase; part of the gene cluster that mediates the biosynthesis of fungal ergot alkaloid. DmaW catalyzes the first step of ergot alkaloid biosynthesis by condensing dimethylallyl diphosphate (DMAP) and tryptophan to form 4-dimethylallyl-L-tryptophan. The second step is catalyzed by the methyltransferase easF that methylates 4-dimethylallyl-L-tryptophan in the presence of S-adenosyl-L-methionine, resulting in the formation of 4-dimethylallyl-L-abrine. The catalase easC and the FAD-dependent oxidoreductase easE then transform 4-dimethylallyl-L-abrine to chanoclavine-I which is further oxidized by easD in the presence of NAD(+), resulting in the formation of chanoclavine-I aldehyde. Agroclavine dehydrogenase easG then mediates the conversion of chanoclavine-I aldehyde to agroclavine via a non-enzymatic adduct reaction: the substrate is an iminium intermediate that is formed spontaneously from chanoclavine-I aldehyde in the presence of glutathione. Further conversion of agroclavine to paspalic acid is a two-step process involving oxidation of agroclavine to elymoclavine and of elymoclavine to paspalic acid, the second step being performed by the elymoclavine oxidase cloA. However, cloA does not encode a functional enzyme indicating that C.fusiformis terminates its ergot alkaloid pathway at elymoclavine. This is Inactive cytochrome P450 monooxygenase cloA from Claviceps fusiformis (Ergot fungus).